The chain runs to 374 residues: Methylthioribose-1-phosphate isomerase (374 aa).

Aspartate 251 (proton donor) is an active-site residue.

The protein belongs to the eIF-2B alpha/beta/delta subunits family. MtnA subfamily.

It localises to the cytoplasm. It is found in the nucleus. The catalysed reaction is 5-(methylsulfanyl)-alpha-D-ribose 1-phosphate = 5-(methylsulfanyl)-D-ribulose 1-phosphate. Its pathway is amino-acid biosynthesis; L-methionine biosynthesis via salvage pathway; L-methionine from S-methyl-5-thio-alpha-D-ribose 1-phosphate: step 1/6. Functionally, catalyzes the interconversion of methylthioribose-1-phosphate (MTR-1-P) into methylthioribulose-1-phosphate (MTRu-1-P). The protein is Methylthioribose-1-phosphate isomerase (IDI2) of Oryza sativa subsp. japonica (Rice).